The primary structure comprises 228 residues: Urease accessory protein UreF (228 aa).

It belongs to the UreF family. UreD, UreF and UreG form a complex that acts as a GTP-hydrolysis-dependent molecular chaperone, activating the urease apoprotein by helping to assemble the nickel containing metallocenter of UreC. The UreE protein probably delivers the nickel.

The protein resides in the cytoplasm. Functionally, required for maturation of urease via the functional incorporation of the urease nickel metallocenter. The chain is Urease accessory protein UreF from Dechloromonas aromatica (strain RCB).